The following is a 1314-amino-acid chain: MALRPGAGSGGGGAAGAGAGSAGGGGFMFPVAGGIRPPQAGLMPMQQQGFPMVSVMQPNMQGIMGMNYSSQMSQGPIAMQAGIPMGPMPAAGMPYLGQAPFLGMRPPGPQYTPDMQKQFAEEQQKRFEQQQKLLEEERKRRQFEEQKQKLRLLSSVKPKTGEKSRDDALEAIKGNLDGFSRDAKMHPTPASHPKKPGPSLEEKFLVSCDISTSGQEQIKLNTSEVGHKALGPGSSKKYPSLMASNGVAVDGCVSGTTTAEAENTSDQNLSIEESGVGVFPSQDPAQPRMPPWIYNESLVPDAYKKILETTMTPTGIDTAKLYPILMSSGLPRETLGQIWALANRTTPGKLTKEELYTVLAMIAVTQRGVPAMSPDALNQFPAAPIPTLSGFSMTLPTPVSQPTVIPSGPAGSMPLSLGQPVMGINLVGPVGGAAAQASSGFIPTYPANQVVKPEEDDFQDFQDASKSGSLDDSFSDFQELPASSKTSNSQHGNSAPSLLMPLPGTKALPSMDKYAVFKGIAADKSSENTVPPGDPGDKYSAFRELEQTAENKPLGESFAEFRSAGTDDGFTDFKTADSVSPLEPPTKDKTFPPSFPSGTIQQKQQTQVKNPLNLADLDMFSSVNCSSEKPLSFSAVFSTSKSVSTPQSTGSAATMTALAATKTSSLADDFGEFSLFGEYSGLAPVGEQDDFADFMAFSNSSISSEQKPDDKYDALKEEASPVPLTSNVGSTVKGGQNSTAASTKYDVFRQLSLEGSGLGVEDLKDNTPSGKSDDDFADFHSSKFSSINSDKSLGEKAVAFRHTKEDSASVKSLDLPSIGGSSVGKEDSEDALSVQFDMKLADVGGDLKHVMSDSSLDLPTVSGQHPPAADIEDLKYAAFGSYSSNFAVSTLTSYDWSDRDDATQGRKLSPFVLSAGSGSPSATSILQKKETSFGSSENITMTSLSKVTTFVSEDALPETTFPALASFKDTIPQTSEQKEYENRDYKDFTKQDLPTAERSQEATCPSPASSGASQETPNECSDDFGEFQSEKPKISKFDFLVATSQSKMKSSEEMIKSELATFDLSVQGSHKRSLSLGDKEISRSSPSPALEQPFRDRSNTLNEKPALPVIRDKYKDLTGEVEENERYAYEWQRCLGSALNVIKKANDTLNGISSSSVCTEVIQSAQGMEYLLGVVEVYRVTKRVELGIKATAVCSEKLQQLLKDIDKVWNNLIGFMSLATLTPDENSLDFSSCMLRPGIKNAQELACGVCLLNVDSRSRKEEKPAEEHPKKAFNSETDSFKLAYGGHQYHASCANFWINCVEPKPPGLVLPDLL.

The stretch at 115–155 (MQKQFAEEQQKRFEQQQKLLEEERKRRQFEEQKQKLRLLSS) forms a coiled coil. Residues 178 to 199 (GFSRDAKMHPTPASHPKKPGPS) are disordered. The 94-residue stretch at 295–388 (NESLVPDAYK…QFPAAPIPTL (94 aa)) folds into the EH domain. The short motif at 457–461 (DFQDF) is the DFXDF motif 1 element. Residues 460–498 (DFQDASKSGSLDDSFSDFQELPASSKTSNSQHGNSAPSL) form a disordered region. Over residues 462–496 (QDASKSGSLDDSFSDFQELPASSKTSNSQHGNSAP) the composition is skewed to polar residues. Serine 473 carries the post-translational modification Phosphoserine. Lysine 513 is subject to N6-acetyllysine. The interval 518-786 (KGIAADKSSE…ADFHSSKFSS (269 aa)) is interaction with AP1G1. At serine 580 the chain carries Phosphoserine. Residues 666-678 (LADDFGEFSLFGE) are interaction with AP1G1, AP1G2 and GGA1. Residues 690–694 (DFADF) carry the DFXDF motif 2 motif. Phosphoserine is present on serine 720. Lysine 744 is modified (N6-acetyllysine). Residues serine 752 and serine 772 each carry the phosphoserine modification. Positions 775 to 779 (DFADF) match the DFXDF motif 3 motif. A phosphoserine mark is found at serine 812, serine 852, serine 855, serine 909, serine 919, and serine 935. Disordered regions lie at residues 972-1026 (PQTS…DFGE) and 1073-1102 (SLSL…NTLN). Over residues 976-990 (EQKEYENRDYKDFTK) the composition is skewed to basic and acidic residues. Residues 1001–1019 (EATCPSPASSGASQETPNE) are compositionally biased toward polar residues. 5 positions are modified to phosphoserine: serine 1006, serine 1073, serine 1075, serine 1087, and serine 1098. Threonine 1100 carries the post-translational modification Phosphothreonine.

In terms of assembly, self-associates. Interacts with GGA1 (via GAE domain). Interacts with GGA2 and GGA3. Interacts with AP1G1 (via GAE domain), a subunit of adapter protein complex AP-1. Interacts with AP1G2 (via GAE domain) a subunit of adapter protein complex AP-1. Component of the aftiphilin/p200/gamma-synergin complex, at least composed of AFTPH/aftiphilin, HEATR5B/p200a and SYNRG/gamma-synergin, which plays a role in the AP1G1/AP-1-mediated trafficking of transferrin from early to recycling endosomes. Within the complex interacts with AFTPH/aftiphilin and HEATR5B/p200a; the interactions are direct. Interacts (via EH domain) with SCAMP1.

It localises to the cytoplasm. It is found in the golgi apparatus. The protein localises to the trans-Golgi network membrane. The protein resides in the perinuclear region. Its subcellular location is the cytoplasmic vesicle. It localises to the clathrin-coated vesicle. Its function is as follows. Plays a role in endocytosis and/or membrane trafficking at the trans-Golgi network (TGN). May act by linking the adapter protein complex AP-1 to other proteins. Component of clathrin-coated vesicles. Component of the aftiphilin/p200/gamma-synergin complex, which plays roles in AP1G1/AP-1-mediated protein trafficking including the trafficking of transferrin from early to recycling endosomes, and the membrane trafficking of furin and the lysosomal enzyme cathepsin D between the trans-Golgi network (TGN) and endosomes. The chain is Synergin gamma from Homo sapiens (Human).